The primary structure comprises 37 residues: U1-theraphotoxin-Hs1b (37 aa).

Disulfide bonds link cysteine 4-cysteine 18, cysteine 8-cysteine 29, and cysteine 23-cysteine 34.

As to quaternary structure, form 1 and form 2 may dimerize. In terms of tissue distribution, expressed by the venom gland.

It is found in the secreted. Lethal neurotoxin that blocks neuromuscular transmission. Acts cooperatively to potentiate the activity of huwentoxin-I. In Cyriopagopus schmidti (Chinese bird spider), this protein is U1-theraphotoxin-Hs1b.